The chain runs to 44 residues: Protein PsbN (44 aa).

A helical membrane pass occupies residues 6 to 26 (FFFTLFLWFFLLSITIYSIYI).

It belongs to the PsbN family.

The protein resides in the plastid. The protein localises to the chloroplast thylakoid membrane. In terms of biological role, may play a role in photosystem I and II biogenesis. This Oedogonium cardiacum (Filamentous green alga) protein is Protein PsbN.